Consider the following 329-residue polypeptide: Interleukin-12 subunit beta (329 aa).

An N-terminal signal peptide occupies residues 1 to 22 (MCHQWLVLSWFSLVLLASPLMA). Positions 29–106 (DVYVVELDWY…LSHSHLLLHK (78 aa)) constitute an Ig-like C2-type domain. The cysteines at positions 50 and 90 are disulfide-linked. Asn-125, Asn-135, and Asn-223 each carry an N-linked (GlcNAc...) asparagine glycan. The Fibronectin type-III domain maps to 238 to 329 (PPKNLQLKPL…WSEWASVSCS (92 aa)).

The protein belongs to the IL-12B family. Heterodimer with IL12A; disulfide-linked. The heterodimer is known as interleukin IL-12. Heterodimer with IL23A; disulfide-linked. The heterodimer is known as interleukin IL-23. Also secreted as a monomer. Interacts with NBR1; this interaction promotes IL-12 secretion.

The protein resides in the secreted. In terms of biological role, cytokine that can act as a growth factor for activated T and NK cells, enhance the lytic activity of NK/lymphokine-activated killer cells, and stimulate the production of IFN-gamma by resting PBMC. Functionally, associates with IL23A to form the IL-23 interleukin, a heterodimeric cytokine which functions in innate and adaptive immunity. IL-23 may constitute with IL-17 an acute response to infection in peripheral tissues. IL-23 binds to a heterodimeric receptor complex composed of IL12RB1 and IL23R, activates the Jak-Stat signaling cascade, stimulates memory rather than naive T-cells and promotes production of pro-inflammatory cytokines. IL-23 induces autoimmune inflammation and thus may be responsible for autoimmune inflammatory diseases and may be important for tumorigenesis. The polypeptide is Interleukin-12 subunit beta (IL12B) (Equus caballus (Horse)).